The primary structure comprises 306 residues: Glutaminase (306 aa).

Residues serine 61, asparagine 111, glutamate 157, asparagine 164, tyrosine 188, tyrosine 240, and valine 258 each coordinate substrate.

It belongs to the glutaminase family. Homotetramer.

It carries out the reaction L-glutamine + H2O = L-glutamate + NH4(+). This Pseudoalteromonas atlantica (strain T6c / ATCC BAA-1087) protein is Glutaminase.